The chain runs to 412 residues: NF-kappa-B essential modulator (412 aa).

Positions M1–P48 are disordered. The segment at M1–V197 is required for interaction with and ubiquitination by MARCHF2. Residues S31 and S43 each carry the phosphoserine; by IKKB modification. The interval E44–K111 is interaction with CHUK/IKBKB. Residues E49–R345 adopt a coiled-coil conformation. S68 bears the Phosphoserine mark. A Phosphoserine; by ATM modification is found at S85. Residues K111, K139, K143, K226, and K246 each participate in a glycyl lysine isopeptide (Lys-Gly) (interchain with G-Cter in ubiquitin) cross-link. An interaction with TANK region spans residues L150–G250. A ubiquitin-binding (UBAN) region spans residues D242–S343. Positions K246 to Q358 are self-association. Positions K249–E412 are required for interaction with TNFAIP3. The linear polyubiquitin-binding, does not bind to 'Lys-63'-linked polyubiquitin stretch occupies residues G250 to G339. K270 is covalently cross-linked (Glycyl lysine isopeptide (Lys-Gly) (interchain with G-Cter in SUMO); alternate). Residue K270 forms a Glycyl lysine isopeptide (Lys-Gly) (interchain with G-Cter in ubiquitin); alternate linkage. Residues K276, K278, K285, and K295 each participate in a glycyl lysine isopeptide (Lys-Gly) (interchain with G-Cter in ubiquitin) cross-link. Residue K302 forms a Glycyl lysine isopeptide (Lys-Gly) (interchain with G-Cter in SUMO); alternate linkage. K302 participates in a covalent cross-link: Glycyl lysine isopeptide (Lys-Gly) (interchain with G-Cter in ubiquitin); alternate. Glycyl lysine isopeptide (Lys-Gly) (interchain with G-Cter in ubiquitin) cross-links involve residues K314, K318, and K319. Positions L315–L336 are leucine-zipper. The residue at position 369 (S369) is a Phosphoserine; by IKKB. The interaction with CYLD stretch occupies residues S375–E412. S380 bears the Phosphoserine mark. A CCHC NOA-type zinc finger spans residues P382 to E412. Zn(2+) is bound at residue C390. K392 is covalently cross-linked (Glycyl lysine isopeptide (Lys-Gly) (interchain with G-Cter in ubiquitin)). Residues C393, H406, and C410 each contribute to the Zn(2+) site.

Homodimer; disulfide-linked. Component of the I-kappa-B-kinase (IKK) core complex consisting of CHUK, IKBKB and IKBKG; probably four alpha/CHUK-beta/IKBKB dimers are associated with four gamma/IKBKG subunits. The IKK core complex seems to associate with regulatory or adapter proteins to form a IKK-signalosome holo-complex. The IKK complex associates with TERF2IP/RAP1, leading to promote IKK-mediated phosphorylation of RELA/p65. Part of a complex composed of NCOA2, NCOA3, CHUK/IKKA, IKBKB, IKBKG and CREBBP. Interacts with COPS3, CYLD, NALP2, TRPC4AP and PIDD1. Interacts with ATM; the complex is exported from the nucleus. Interacts with TRAF6. Interacts with IKBKE. Interacts with TANK; the interaction is enhanced by IKBKE and TBK1. Part of a ternary complex consisting of TANK, IKBKB and IKBKG. Interacts with ZFAND5. Interacts with RIPK2. Interacts with TNIP1 and TNFAIP3; TNIP1 facilitates the TNFAIP3-mediated de-ubiquitination of IKBKG. Interacts with TNFAIP3; the interaction is induced by TNF stimulation and by polyubiquitin. Binds (via UBAN region) polyubiquitin; binds both 'Lys-63'-linked and linear polyubiquitin, with higher affinity for linear ubiquitin. Interacts with NLRP10. Interacts with TANK; this interaction increases in response to DNA damage. Interacts with USP10; this interaction increases in response to DNA damage. Interacts with ZC3H12A; this interaction increases in response to DNA damage. Interacts with IFIT5; the interaction synergizes the recruitment of IKK to MAP3K7 and enhances IKK phosphorylation. Interacts with TRIM29; this interaction induces IKBKG/NEMO ubiquitination and proteolytic degradation. Interacts with TRIM13; this interaction leads to IKBKG/NEMO ubiquitination. Interacts with ARFIP2. Interacts with RIPK1. Interacts with (ubiquitinated) BCL10; interaction with polyubiquitinated BCL10 via both 'Lys-63'-linked and linear ubiquitin is required for TCR-induced NF-kappa-B activation. Interacts with MARCHF2; during the late stages of macrophage viral and bacterial infection; the interaction leads to ubiquitination and degradation of IKBKG/NEMO. Post-translationally, phosphorylation at Ser-68 attenuates aminoterminal homodimerization. Polyubiquitinated on Lys-278 via 'Lys-63'-linked ubiquitin; the ubiquitination is mediated downstream of NOD2 and RIPK2 and probably plays a role in signaling by facilitating interactions with ubiquitin domain-containing proteins and activates the NF-kappa-B pathway. Polyubiquitinated on Lys-278 and Lys-302 through 'Lys-63'-linked ubiquitin; the ubiquitination is mediated by BCL10, MALT1 and TRAF6 and probably plays a role in signaling by facilitating interactions with ubiquitin domain-containing proteins and activates the NF-kappa-B pathway. Monoubiquitinated on Lys-270 and Lys-302; promotes nuclear export. Polyubiquitinated through 'Lys-27' by TRIM23; involved in antiviral innate and inflammatory responses. Linear polyubiquitinated on Lys-111, Lys-143, Lys-226, Lys-246, Lys-270, Lys-278, Lys-285, Lys-295, Lys-302 and Lys-319; the head-to-tail polyubiquitination is mediated by the LUBAC complex and plays a key role in NF-kappa-B activation. Deubiquitinated by USP10 in a TANK-dependent and -independent manner, leading to the negative regulation of NF-kappa-B signaling upon DNA damage. Ubiquitinated at Lys-319 by MARCHF2 following bacterial and viral infection which leads to its degradation. Polyubiquitinated via 'Lys-29'-linked ubiquitin; leading to lysosomal degradation. In terms of processing, sumoylated on Lys-270 and Lys-302 with SUMO1; the modification results in phosphorylation of Ser-85 by ATM leading to a replacement of the sumoylation by mono-ubiquitination on these residues. Post-translationally, neddylated by TRIM40, resulting in stabilization of NFKBIA and down-regulation of NF-kappa-B activity.

The protein resides in the cytoplasm. It is found in the nucleus. Its function is as follows. Regulatory subunit of the IKK core complex which phosphorylates inhibitors of NF-kappa-B thus leading to the dissociation of the inhibitor/NF-kappa-B complex and ultimately the degradation of the inhibitor. Its binding to scaffolding polyubiquitin plays a key role in IKK activation by multiple signaling receptor pathways. Can recognize and bind both 'Lys-63'-linked and linear polyubiquitin upon cell stimulation, with a much highr affinity for linear polyubiquitin. Could be implicated in NF-kappa-B-mediated protection from cytokine toxicity. Essential for viral activation of IRF3. Involved in TLR3- and IFIH1-mediated antiviral innate response; this function requires 'Lys-27'-linked polyubiquitination. This chain is NF-kappa-B essential modulator (Ikbkg), found in Mus musculus (Mouse).